Consider the following 264-residue polypeptide: MSKITSSTLLKFKQEGKKFTALTAYDASFAGAFDSEGIDVLLVGDSLGMVLQGHDDTLPVTVEDIVYHTRCVRRGIKRSLLIADMPFMSYATPEQAMTNATALMQAGANMVKLEGGHWLLETVTKLTERGIPVCAHLGLTPQSVHVFGGFKVQGRDADNAQRIIDEAKAIEAAGAQLLVLECIPAALAKSITEALTIPVIGIGAGADTDGQILVMHDVLGISSGYIPRFSKNYLAQTGEIRSAIRAYIEEVDTGVFPAAEHTFS.

Asp-45 and Asp-84 together coordinate Mg(2+). 3-methyl-2-oxobutanoate contacts are provided by residues 45-46 (DS), Asp-84, and Lys-112. Glu-114 serves as a coordination point for Mg(2+). Catalysis depends on Glu-181, which acts as the Proton acceptor.

Belongs to the PanB family. In terms of assembly, homodecamer; pentamer of dimers. Requires Mg(2+) as cofactor.

The protein localises to the cytoplasm. The enzyme catalyses 3-methyl-2-oxobutanoate + (6R)-5,10-methylene-5,6,7,8-tetrahydrofolate + H2O = 2-dehydropantoate + (6S)-5,6,7,8-tetrahydrofolate. It participates in cofactor biosynthesis; (R)-pantothenate biosynthesis; (R)-pantoate from 3-methyl-2-oxobutanoate: step 1/2. Its function is as follows. Catalyzes the reversible reaction in which hydroxymethyl group from 5,10-methylenetetrahydrofolate is transferred onto alpha-ketoisovalerate to form ketopantoate. The polypeptide is 3-methyl-2-oxobutanoate hydroxymethyltransferase (Shewanella loihica (strain ATCC BAA-1088 / PV-4)).